A 654-amino-acid chain; its full sequence is Protein fem-1 homolog A-like (654 aa).

7 ANK repeats span residues 2 to 31, 40 to 70, 82 to 111, 115 to 145, 149 to 178, 182 to 211, and 214 to 243; these read DLHT…REEL, GGGT…SVEA, EGAP…SVNR, TNST…DLEV, HGHT…QVNR, KGNT…RMER, and YGMT…SHEQ. At serine 108 the chain carries Phosphoserine. The tract at residues 241-265 is disordered; the sequence is HEQLSGTELPGEGSSQMAGNHCSTP. The span at 253–263 shows a compositional bias: polar residues; it reads GSSQMAGNHCS. TPR repeat units follow at residues 283 to 317 and 375 to 408; these read VEAL…RHQG and SYYI…QQNN. ANK repeat units follow at residues 519–561 and 565–594; these read NGFT…DPDS and DNNS…HMDA. Serine 608 carries the post-translational modification Phosphoserine.

This sequence belongs to the fem-1 family. As to quaternary structure, component of a CRL2 E3 ubiquitin-protein ligase complex, also named ECS (Elongin BC-CUL2/5-SOCS-box protein) complex, composed of CUL2, Elongin BC (ELOB and ELOC), RBX1 and substrate-specific adapter FEM1A.

The protein localises to the mitochondrion. It is found in the cytoplasm. It functions in the pathway protein modification; protein ubiquitination. In terms of biological role, substrate-recognition component of a Cul2-RING (CRL2) E3 ubiquitin-protein ligase complex of the DesCEND (destruction via C-end degrons) pathway, which recognizes a C-degron located at the extreme C terminus of target proteins, leading to their ubiquitination and degradation. The C-degron recognized by the DesCEND pathway is usually a motif of less than ten residues and can be present in full-length proteins, truncated proteins or proteolytically cleaved forms. The CRL2(FEM1A) complex specifically recognizes proteins with an arginine at the C-terminus: recognizes and binds proteins ending with -Lys/Arg-Xaa-Arg and -Lys/Arg-Xaa-Xaa-Arg C-degrons, such as SIL1 or OR51B2, leading to their ubiquitination and degradation. This Mus musculus (Mouse) protein is Protein fem-1 homolog A-like.